The sequence spans 511 residues: Exodeoxyribonuclease 7 large subunit (511 aa).

It belongs to the XseA family. In terms of assembly, heterooligomer composed of large and small subunits.

The protein localises to the cytoplasm. It carries out the reaction Exonucleolytic cleavage in either 5'- to 3'- or 3'- to 5'-direction to yield nucleoside 5'-phosphates.. In terms of biological role, bidirectionally degrades single-stranded DNA into large acid-insoluble oligonucleotides, which are then degraded further into small acid-soluble oligonucleotides. This chain is Exodeoxyribonuclease 7 large subunit, found in Brucella melitensis biotype 1 (strain ATCC 23456 / CCUG 17765 / NCTC 10094 / 16M).